We begin with the raw amino-acid sequence, 82 residues long: uncharacterized protein (82 aa).

Transmembrane regions (helical) follow at residues 29–49 (LMNAGSAVADIISPIAFGIII) and 55–75 (WSLPFYGSVALLVIGIFLTFF).

The protein resides in the cell membrane. This is an uncharacterized protein from Escherichia coli (strain K12).